The primary structure comprises 296 residues: 33 kDa chaperonin (296 aa).

Intrachain disulfides connect C238–C240 and C271–C274.

This sequence belongs to the HSP33 family. Under oxidizing conditions two disulfide bonds are formed involving the reactive cysteines. Under reducing conditions zinc is bound to the reactive cysteines and the protein is inactive.

It is found in the cytoplasm. In terms of biological role, redox regulated molecular chaperone. Protects both thermally unfolding and oxidatively damaged proteins from irreversible aggregation. Plays an important role in the bacterial defense system toward oxidative stress. This Clostridium botulinum (strain 657 / Type Ba4) protein is 33 kDa chaperonin.